The sequence spans 78 residues: Sperm-specific protein Phi-0 (78 aa).

Composition is skewed to basic residues over residues 1-21 (MVAR…RSAA), 31-57 (AASR…KPKA), and 64-78 (VRRR…SVSK). The interval 1–78 (MVARRQTKKA…RRIRRASVSK (78 aa)) is disordered.

The protein localises to the nucleus. Its subcellular location is the chromosome. Functionally, involved in nuclear basic protein transition: histones are replaced by spermatid specific proteins which are themselves replaced by protamines in late spermatids. The polypeptide is Sperm-specific protein Phi-0 (Holothuria tubulosa (Tubular sea cucumber)).